The chain runs to 429 residues: Adenylosuccinate synthetase (429 aa).

GTP contacts are provided by residues 12–18 (GDEGKGK) and 40–42 (GHT). Asp-13 serves as the catalytic Proton acceptor. Mg(2+) is bound by residues Asp-13 and Gly-40. IMP contacts are provided by residues 13–16 (DEGK), 38–41 (NAGH), Thr-129, Arg-143, Gln-223, Thr-238, and Arg-302. Catalysis depends on His-41, which acts as the Proton donor. Position 298–304 (298–304 (TVTGRRR)) interacts with substrate. GTP contacts are provided by residues Arg-304, 330-332 (KLD), and 412-414 (STS).

Belongs to the adenylosuccinate synthetase family. Homodimer. Mg(2+) is required as a cofactor.

It is found in the cytoplasm. It carries out the reaction IMP + L-aspartate + GTP = N(6)-(1,2-dicarboxyethyl)-AMP + GDP + phosphate + 2 H(+). It functions in the pathway purine metabolism; AMP biosynthesis via de novo pathway; AMP from IMP: step 1/2. Functionally, plays an important role in the de novo pathway of purine nucleotide biosynthesis. Catalyzes the first committed step in the biosynthesis of AMP from IMP. The sequence is that of Adenylosuccinate synthetase from Zymomonas mobilis subsp. mobilis (strain ATCC 31821 / ZM4 / CP4).